A 351-amino-acid polypeptide reads, in one-letter code: Nicotinate-nucleotide--dimethylbenzimidazole phosphoribosyltransferase (351 aa).

Glu-317 acts as the Proton acceptor in catalysis.

The protein belongs to the CobT family.

The catalysed reaction is 5,6-dimethylbenzimidazole + nicotinate beta-D-ribonucleotide = alpha-ribazole 5'-phosphate + nicotinate + H(+). Its pathway is nucleoside biosynthesis; alpha-ribazole biosynthesis; alpha-ribazole from 5,6-dimethylbenzimidazole: step 1/2. In terms of biological role, catalyzes the synthesis of alpha-ribazole-5'-phosphate from nicotinate mononucleotide (NAMN) and 5,6-dimethylbenzimidazole (DMB). In Pseudomonas fluorescens (strain SBW25), this protein is Nicotinate-nucleotide--dimethylbenzimidazole phosphoribosyltransferase.